The primary structure comprises 63 residues: Large ribosomal subunit protein uL29 (63 aa).

Belongs to the universal ribosomal protein uL29 family.

The polypeptide is Large ribosomal subunit protein uL29 (Shewanella baltica (strain OS223)).